The following is a 112-amino-acid chain: Putative RNase TTE0752 (112 aa).

Active-site residues include R74 and H79. The RX(4)HXY motif motif lies at 74-81; it reads RDKLIHEY. The residue at position 81 (Y81) is an O-di-AMP-tyrosine.

The protein belongs to the HepT RNase toxin family. As to quaternary structure, homodimer, probably forms a complex with cognate antitoxin TTE0751. Post-translationally, modified by cognate antitoxin TTE0751; probably at least 2 successive AMPylation events occur on Tyr-81.

Probable toxic component of a putative type VII toxin-antitoxin (TA) system, probably an RNase. Probably neutralized by cognate antitoxin TTE0751. Neutralization may be due to AMPylation by TTE0751. This is Putative RNase TTE0752 from Caldanaerobacter subterraneus subsp. tengcongensis (strain DSM 15242 / JCM 11007 / NBRC 100824 / MB4) (Thermoanaerobacter tengcongensis).